The following is a 219-amino-acid chain: uncharacterized protein (219 aa).

This is an uncharacterized protein from Mycoplasma genitalium (strain ATCC 33530 / DSM 19775 / NCTC 10195 / G37) (Mycoplasmoides genitalium).